Consider the following 388-residue polypeptide: Lipid-A-disaccharide synthase (388 aa).

It belongs to the LpxB family.

The catalysed reaction is a lipid X + a UDP-2-N,3-O-bis[(3R)-3-hydroxyacyl]-alpha-D-glucosamine = a lipid A disaccharide + UDP + H(+). Its pathway is bacterial outer membrane biogenesis; LPS lipid A biosynthesis. Functionally, condensation of UDP-2,3-diacylglucosamine and 2,3-diacylglucosamine-1-phosphate to form lipid A disaccharide, a precursor of lipid A, a phosphorylated glycolipid that anchors the lipopolysaccharide to the outer membrane of the cell. This is Lipid-A-disaccharide synthase from Saccharophagus degradans (strain 2-40 / ATCC 43961 / DSM 17024).